Reading from the N-terminus, the 486-residue chain is N-succinylglutamate 5-semialdehyde dehydrogenase (486 aa).

220 to 225 is an NAD(+) binding site; the sequence is GSSRTG. Catalysis depends on residues E243 and C277.

It belongs to the aldehyde dehydrogenase family. AstD subfamily.

The catalysed reaction is N-succinyl-L-glutamate 5-semialdehyde + NAD(+) + H2O = N-succinyl-L-glutamate + NADH + 2 H(+). Its pathway is amino-acid degradation; L-arginine degradation via AST pathway; L-glutamate and succinate from L-arginine: step 4/5. Catalyzes the NAD-dependent reduction of succinylglutamate semialdehyde into succinylglutamate. This Shewanella woodyi (strain ATCC 51908 / MS32) protein is N-succinylglutamate 5-semialdehyde dehydrogenase.